Reading from the N-terminus, the 118-residue chain is MQSLRPEQTRGLLEPERTKTLLPRESRAWEKPPHPACTKDWEAVEVGASSHDSDEKDLSSQETGLSQEWSSVEEDDESEGSQGFVEWSKAPQQTTIVLVVCVLFLFLVLTGMPMMFHI.

The segment at 1 to 84 (MQSLRPEQTR…DDESEGSQGF (84 aa)) is disordered. The span at 13–42 (LEPERTKTLLPRESRAWEKPPHPACTKDWE) shows a compositional bias: basic and acidic residues. The chain crosses the membrane as a helical span at residues 96–116 (IVLVVCVLFLFLVLTGMPMMF).

It is found in the membrane. The protein is Small integral membrane protein 17 (SMIM17) of Homo sapiens (Human).